A 945-amino-acid polypeptide reads, in one-letter code: Isoleucine--tRNA ligase (945 aa).

Residues 1–10 show a composition bias toward basic and acidic residues; it reads MSNKKADSKP. The segment at 1–21 is disordered; that stretch reads MSNKKADSKPQAKYPVNLLDT. Positions 66 to 76 match the 'HIGH' region motif; that stretch reads PYANGDIHLGH. Glu-581 is an L-isoleucyl-5'-AMP binding site. The short motif at 622–626 is the 'KMSKS' region element; it reads KMSKS. Lys-625 provides a ligand contact to ATP. Zn(2+)-binding residues include Cys-908, Cys-911, Cys-928, and Cys-931.

This sequence belongs to the class-I aminoacyl-tRNA synthetase family. IleS type 1 subfamily. In terms of assembly, monomer. The cofactor is Zn(2+).

Its subcellular location is the cytoplasm. It catalyses the reaction tRNA(Ile) + L-isoleucine + ATP = L-isoleucyl-tRNA(Ile) + AMP + diphosphate. Catalyzes the attachment of isoleucine to tRNA(Ile). As IleRS can inadvertently accommodate and process structurally similar amino acids such as valine, to avoid such errors it has two additional distinct tRNA(Ile)-dependent editing activities. One activity is designated as 'pretransfer' editing and involves the hydrolysis of activated Val-AMP. The other activity is designated 'posttransfer' editing and involves deacylation of mischarged Val-tRNA(Ile). This Burkholderia multivorans (strain ATCC 17616 / 249) protein is Isoleucine--tRNA ligase.